A 342-amino-acid chain; its full sequence is S-adenosylmethionine:tRNA ribosyltransferase-isomerase (342 aa).

This sequence belongs to the QueA family. Monomer.

The protein localises to the cytoplasm. It carries out the reaction 7-aminomethyl-7-carbaguanosine(34) in tRNA + S-adenosyl-L-methionine = epoxyqueuosine(34) in tRNA + adenine + L-methionine + 2 H(+). It functions in the pathway tRNA modification; tRNA-queuosine biosynthesis. Transfers and isomerizes the ribose moiety from AdoMet to the 7-aminomethyl group of 7-deazaguanine (preQ1-tRNA) to give epoxyqueuosine (oQ-tRNA). This is S-adenosylmethionine:tRNA ribosyltransferase-isomerase from Bacillus velezensis (strain DSM 23117 / BGSC 10A6 / LMG 26770 / FZB42) (Bacillus amyloliquefaciens subsp. plantarum).